A 195-amino-acid chain; its full sequence is UPF0215 protein TK2033 (195 aa).

It belongs to the UPF0215 family.

The chain is UPF0215 protein TK2033 from Thermococcus kodakarensis (strain ATCC BAA-918 / JCM 12380 / KOD1) (Pyrococcus kodakaraensis (strain KOD1)).